Reading from the N-terminus, the 793-residue chain is Wall-associated receptor kinase-like 18 (793 aa).

Residues 1–28 (MSNESTNCSFFLNLFMLLLLLIFYSADA) form the signal peptide. Residues 29-378 (CQRECGGISI…YRCVRDKTKA (350 aa)) are Extracellular-facing. N-linked (GlcNAc...) asparagine glycans are attached at residues Asn-60, Asn-130, Asn-170, Asn-238, Asn-285, and Asn-304. An atypical EGF-like region spans residues 312 to 371 (CTCGRITISETSYANCGCTYGYTGNPYVLNGCKDIDECKVKFEYCGKTETCVNFEGGYRC). Disulfide bonds link Cys-314–Cys-327, Cys-349–Cys-362, and Cys-356–Cys-371. A helical membrane pass occupies residues 379 to 399 (IMIGAGTGFGVLVLVGGLWWL). Residues 400 to 793 (RKFLIKRRIT…VEPLFPRLTW (394 aa)) lie on the Cytoplasmic side of the membrane. One can recognise a Protein kinase domain in the interval 453-728 (FSENRVLGHG…REVFTELERI (276 aa)). ATP-binding positions include 459-467 (LGHGGQGTV) and Lys-481. A Phosphotyrosine modification is found at Tyr-526. The active-site Proton acceptor is the Asp-579. Residues Thr-613 and Thr-618 each carry the phosphothreonine modification. Tyr-626 is modified (phosphotyrosine). The tract at residues 733 to 757 (EDSQVHNRIDEEEEEEEEEEEVVTT) is disordered. Residues 742–754 (DEEEEEEEEEEEV) are compositionally biased toward acidic residues.

The protein belongs to the protein kinase superfamily. Ser/Thr protein kinase family.

Its subcellular location is the membrane. It carries out the reaction L-seryl-[protein] + ATP = O-phospho-L-seryl-[protein] + ADP + H(+). The catalysed reaction is L-threonyl-[protein] + ATP = O-phospho-L-threonyl-[protein] + ADP + H(+). Serine/threonine-protein kinase that may function as a signaling receptor of extracellular matrix component. The polypeptide is Wall-associated receptor kinase-like 18 (WAKL18) (Arabidopsis thaliana (Mouse-ear cress)).